The chain runs to 143 residues: Large ribosomal subunit protein uL11 (143 aa).

The protein belongs to the universal ribosomal protein uL11 family. Part of the ribosomal stalk of the 50S ribosomal subunit. Interacts with L10 and the large rRNA to form the base of the stalk. L10 forms an elongated spine to which L12 dimers bind in a sequential fashion forming a multimeric L10(L12)X complex. One or more lysine residues are methylated.

In terms of biological role, forms part of the ribosomal stalk which helps the ribosome interact with GTP-bound translation factors. The sequence is that of Large ribosomal subunit protein uL11 from Erythrobacter litoralis (strain HTCC2594).